The primary structure comprises 316 residues: Retinol dehydrogenase 12 (316 aa).

46–52 (GANTGIG) serves as a coordination point for NADP(+). S175 is a substrate binding site. Residue Y200 is the Proton acceptor of the active site.

It belongs to the short-chain dehydrogenases/reductases (SDR) family. As to expression, widely expressed, mostly in retina, kidney, brain, skeletal muscle, pancreas and stomach.

It is found in the endoplasmic reticulum membrane. The enzyme catalyses all-trans-retinol + NADP(+) = all-trans-retinal + NADPH + H(+). It catalyses the reaction 11-cis-retinol + NADP(+) = 11-cis-retinal + NADPH + H(+). The catalysed reaction is 9-cis-retinol + NADP(+) = 9-cis-retinal + NADPH + H(+). It carries out the reaction a 4-hydroxynonen-1-ol + NADP(+) = a 4-hydroxynonenal + NADPH + H(+). The enzyme catalyses (E)-non-2-en-1-ol + NADP(+) = (E)-non-2-enal + NADPH + H(+). It catalyses the reaction (Z)-non-6-en-1-ol + NADP(+) = (Z)-non-6-enal + NADPH + H(+). The catalysed reaction is nonan-1-ol + NADP(+) = nonanal + NADPH + H(+). It participates in cofactor metabolism; retinol metabolism. In terms of biological role, retinoids dehydrogenase/reductase with a clear preference for NADP. Displays high activity towards 9-cis, 11-cis and all-trans-retinal. Shows very weak activity towards 13-cis-retinol. Also exhibits activity, albeit with lower affinity than for retinaldehydes, towards lipid peroxidation products (C9 aldehydes) such as 4-hydroxynonenal and trans-2-nonenal. May play an important function in photoreceptor cells to detoxify 4-hydroxynonenal and potentially other toxic aldehyde products resulting from lipid peroxidation. Has no dehydrogenase activity towards steroids. The protein is Retinol dehydrogenase 12 (RDH12) of Homo sapiens (Human).